The sequence spans 343 residues: Lumican (343 aa).

The first 18 residues, 1-18 (MTLNSLPIFLVLISGIFC), serve as a signal peptide directing secretion. At Gln19 the chain carries Pyrrolidone carboxylic acid. A sulfotyrosine mark is found at Tyr20 and Tyr22. The 39-residue stretch at 31–69 (DPFGPSTAVCAPECNCPLSYPTAMYCDNLKLKTIPIVPS) folds into the LRRNT domain. LRR repeat units lie at residues 70 to 91 (GIKYLYLRNNMIEAIEENTFDN), 94 to 117 (DLQWLILDHNHLENSKIKGRVFSK), 120 to 140 (NLKKLHINYNNLTEAVGPLPK), 141 to 162 (TLDDLQLSHNKITKVNPGALEG), 165 to 186 (NLTVIHLQNNQLKTDSISGAFK), 190 to 211 (SLLYLDLSFNQLTKLPTGLPHS), 212 to 232 (LLMLYFDNNQISNIPDEYFQG), and 235 to 255 (TLQYLRLSHNKLTDSGIPGNV). Residue Asn91 is glycosylated (N-linked (GlcNAc...) (keratan sulfate) asparagine). N-linked (GlcNAc...) (keratan sulfate) asparagine glycosylation is present at Asn130. An N-linked (GlcNAc...) (keratan sulfate) asparagine glycan is attached at Asn165. A glycan (N-linked (GlcNAc...) (keratan sulfate) asparagine) is linked at Asn257. LRR repeat units follow at residues 260 to 281 (SLVELDLSFNQLKSIPTVSENL), 282 to 301 (ENFYLQVNKINKFPLSSFCK), and 310 to 330 (KITHLRLDGNNLTRADLPQEM). Cys300 and Cys333 form a disulfide bridge. Residue Asn320 is glycosylated (N-linked (GlcNAc...) asparagine).

The protein belongs to the small leucine-rich proteoglycan (SLRP) family. SLRP class II subfamily. In terms of assembly, binds to laminin. In terms of processing, contains keratan sulfate. Cornea and other tissues.

Its subcellular location is the secreted. It is found in the extracellular space. The protein localises to the extracellular matrix. This Gallus gallus (Chicken) protein is Lumican (LUM).